The chain runs to 278 residues: Sulfur carrier protein FdhD (278 aa).

The Cysteine persulfide intermediate role is filled by cysteine 121. Mo-bis(molybdopterin guanine dinucleotide) is bound at residue 260–265; sequence FCKPGR.

Belongs to the FdhD family.

The protein resides in the cytoplasm. In terms of biological role, required for formate dehydrogenase (FDH) activity. Acts as a sulfur carrier protein that transfers sulfur from IscS to the molybdenum cofactor prior to its insertion into FDH. In Salmonella agona (strain SL483), this protein is Sulfur carrier protein FdhD.